The chain runs to 443 residues: Trihelix transcription factor ASIL2 (443 aa).

The disordered stretch occupies residues 1–82 (MEDDEDIRSQ…RPTGGGGRED (82 aa)). Polar residues predominate over residues 38-48 (YSLTPPGNSSQ). The segment covering 64–78 (SGGGNNSSGRPTGGG) has biased composition (gly residues). In terms of domain architecture, Myb-like spans 84-144 (WSEAATAVLI…QCKNRIDTVK (61 aa)). 2 disordered regions span residues 238 to 350 (FGGS…GNKW) and 413 to 443 (RRMGNTSNDHHHSRKNNINAIVNNNNDLGNN). Residues 239-249 (GGSGGGGGGGS) show a composition bias toward gly residues. A compositionally biased stretch (low complexity) spans 271-286 (TLPQQGRTLPQQQQQG). The Bipartite nuclear localization signal signature appears at 290–303 (KRCSESKRWRFRKR). Basic and acidic residues predominate over residues 333–350 (MKTEEKKKQDGDGVGNKW). Residues 360–414 (FGEAYEQTENAKLQQVVEMEKERMKFLKELELQRMQFFVKTQLEISQLKQQHGRR) adopt a coiled-coil conformation. Positions 428–443 (NNINAIVNNNNDLGNN) are enriched in low complexity.

The protein resides in the nucleus. Functionally, transcription regulator that may repress the maturation program during early embryogenesis. The polypeptide is Trihelix transcription factor ASIL2 (Arabidopsis thaliana (Mouse-ear cress)).